The chain runs to 467 residues: Prenyltransferase GME11375 (467 aa).

Residue E93 participates in L-tryptophan binding. R108, K196, Y198, K266, Y268, and Y436 together coordinate dimethylallyl diphosphate.

It belongs to the tryptophan dimethylallyltransferase family.

Its pathway is secondary metabolite biosynthesis. Its function is as follows. Prenyltransferase; part of the gene cluster that mediates the biosynthesis of dibenzodioxocinones such as pestalotiollide B, a novel class of inhibitors against cholesterol ester transfer protein (CEPT). The biosynthesis initiates from condensation of acetate and malonate units catalyzed by the non-reducing PKS pks8/GME11356. Pks8/GME11356 lacks a thioesterase (TE) domain, which is important to the cyclizing of the third ring of atrochrysone carboxylic acid, and the esterase GME11355 might play the role of TE and catalyzes the cyclization reaction of the C ring. The lactamase-like protein GME11357 (or other beta-lactamases in Pestalotiopsis microspora) probably hydrolyzes the thioester bond between the ACP of pks8/GME11356 and the intermediate to release atrochrysone carboxylic acid, which is spontaneously dehydrates to form endocrocin anthrone. Endocrocin anthrone is further converted to emodin via the endocrocin intermediate. Emodin is then oxidized by several enzymes such as the Baeyer-Villiger oxidase GME11358, the oxidoreductase GME11367, the short chain dehydrogenase/reductase GME11373, as well as by other oxidoreductases from the cluster, to modify the A and C rings and open the B ring, and finally yield monodictyphenone. The prenyltransferase GME11375 may catalyze the addition reaction between the C5 side chains and the carbon bone of dibenzodioxocinones. The remaining biochemical reactions to the final product dibenzodioxocinones should be methylation catalyzed by methyltransferase GME11366 and reduction and lactonization reaction catalyzed by a series of oxidordeuctases. In Pestalotiopsis microspora, this protein is Prenyltransferase GME11375.